The sequence spans 399 residues: MSRFQRVAVLGSTGSIGESTLDVIARHPEQLAVFALSAHSRIERLAEQAAASAAAVVVVPDAAARQRFLAAWPAGRTPPEIRVGAQALADTAADAACDTVMAAIVGAAGLPAALAAAQAGKRVLLANKEALVAAGALFMRAVRANGAELLPIDSEHNAIFQCLPHEGRASAPEQPARGVRRLILTASGGPFRRHDPLDLHEVTPDQACAHPNWSMGRKISVDSATMLNKGLEVIEAHWLFAMPPERIEVLIHPQSVVHSMVEYDDGSVLAQLGQPDMRTPISYGLGFPERLASGVGPLDLARWGRLEFETPDLRRFPCLQLAFDALRAGQAACVALNAANEVAVDAFLSGRLRYTWISRVIAAALEWQQRQSSVTLDSLADVLALDAATRAYAGNLGLA.

The NADPH site is built by threonine 13, glycine 14, serine 15, isoleucine 16, and asparagine 127. Lysine 128 is a binding site for 1-deoxy-D-xylulose 5-phosphate. Residue glutamate 129 coordinates NADPH. Aspartate 153 is a binding site for Mn(2+). Serine 154, glutamate 155, serine 187, and histidine 210 together coordinate 1-deoxy-D-xylulose 5-phosphate. Glutamate 155 lines the Mn(2+) pocket. Glycine 216 contacts NADPH. Residues serine 223, asparagine 228, lysine 229, and glutamate 232 each coordinate 1-deoxy-D-xylulose 5-phosphate. Residue glutamate 232 coordinates Mn(2+).

This sequence belongs to the DXR family. Mg(2+) is required as a cofactor. Requires Mn(2+) as cofactor.

It carries out the reaction 2-C-methyl-D-erythritol 4-phosphate + NADP(+) = 1-deoxy-D-xylulose 5-phosphate + NADPH + H(+). It participates in isoprenoid biosynthesis; isopentenyl diphosphate biosynthesis via DXP pathway; isopentenyl diphosphate from 1-deoxy-D-xylulose 5-phosphate: step 1/6. Functionally, catalyzes the NADPH-dependent rearrangement and reduction of 1-deoxy-D-xylulose-5-phosphate (DXP) to 2-C-methyl-D-erythritol 4-phosphate (MEP). The sequence is that of 1-deoxy-D-xylulose 5-phosphate reductoisomerase from Bordetella petrii (strain ATCC BAA-461 / DSM 12804 / CCUG 43448).